An 84-amino-acid chain; its full sequence is MDSFSSSSGSPPNTEALMDQIKAQLAQAYAQEFLETVGNKCFAKCVTKPGSSLSGSESSCISRCVDRYIEATGIVSRALFSSTR.

The Twin CX3C motif motif lies at 41 to 64 (CFAKCVTKPGSSLSGSESSCISRC). 2 cysteine pairs are disulfide-bonded: Cys-41/Cys-64 and Cys-45/Cys-60.

The protein belongs to the small Tim family. In terms of assembly, heterohexamer; composed of 3 copies of TIM8 and 3 copies of TIM13, named soluble 70 kDa complex. Associates with the TIM22 complex, whose core is composed of TIM22.

It localises to the mitochondrion intermembrane space. Mitochondrial intermembrane chaperone that participates in the import and insertion of some multi-pass transmembrane proteins into the mitochondrial inner membrane. Also required for the transfer of beta-barrel precursors from the TOM complex to the sorting and assembly machinery (SAM complex) of the outer membrane. Acts as a chaperone-like protein that protects the hydrophobic precursors from aggregation and guide them through the mitochondrial intermembrane space. The TIM8-TIM13 complex mediates the import of some proteins while the predominant TIM9-TIM10 70 kDa complex mediates the import of much more proteins. This is Mitochondrial import inner membrane translocase subunit Tim13 (TIM13) from Oryza sativa subsp. japonica (Rice).